We begin with the raw amino-acid sequence, 637 residues long: CD2-associated protein (637 aa).

The 59-residue stretch at 1 to 59 (MVDYIVEYDYDAVHDDELTIRVGEIIRNVKKLQEEGWLEGELNGRRGMFPDNFVKEIKR) folds into the SH3 1; truncated domain. Residues 1–175 (MVDYIVEYDY…ESTEDGETHN (175 aa)) form an interaction with ANLN and localization to the midbody region. Lys58 is covalently cross-linked (Glycyl lysine isopeptide (Lys-Gly) (interchain with G-Cter in SUMO2)). Phosphoserine occurs at positions 80 and 86. Positions 108 to 167 (TKKRQCKVLFDYSPQNEDELELIVGDVIDVIEEVEEGWWSGTLNNKLGLFPSNFVKELES) constitute an SH3 2 domain. Basic and acidic residues predominate over residues 166–177 (ESTEDGETHNAQ). Positions 166–209 (ESTEDGETHNAQEESEVPLTGPTSPLPSPGNGSEPAPGSVAQPK) are disordered. Ser224 bears the Phosphoserine mark. The segment at 226–254 (KLRTRTSSSETEEKKTEKPLILQPLGSRT) is disordered. One can recognise an SH3 3 domain in the interval 269-330 (KAKEYCRTLF…PDNFAVQISE (62 aa)). Residues 333–455 (KDFPKPKKPP…KLDPEQLPVR (123 aa)) are disordered. 3 short sequence motifs (SH3-binding) span residues 336–352 (PKPK…APKP), 378–397 (KPSK…APTK), and 410–422 (PKRP…PPPP). A compositionally biased stretch (pro residues) spans 341-351 (PPPPAKGPAPK). Residues 356–379 (AAEKKAFPLKAEEKDEKSLLEQKP) show a composition bias toward basic and acidic residues. Over residues 437–449 (IDTEPVSKPKLDP) the composition is skewed to basic and acidic residues. A phosphoserine mark is found at Ser458, Ser469, Ser510, and Ser514. The disordered stretch occupies residues 488-555 (HLTANRPKMP…SLSTPSSASK (68 aa)). Over residues 517–539 (KTLKLPKEDDSGNLKPLEFKKDA) the composition is skewed to basic and acidic residues. Lys523 is covalently cross-linked (Glycyl lysine isopeptide (Lys-Gly) (interchain with G-Cter in SUMO2)). Over residues 540-555 (SYSSKSSLSTPSSASK) the composition is skewed to low complexity. A Phosphothreonine modification is found at Thr563. Residues 578-636 (RNSVDELRAQIIELLCIVDALKKDHGKELEKLRKELEEEKAMRSNLEVEIAKLKKAVLL) are a coiled coil. Phosphoserine is present on Ser580.

In terms of assembly, homodimer. Interacts with F-actin, PKD2, NPHS1 and NPHS2. Interacts with WTIP. Interacts with DDN; interaction is direct. Interacts (via SH3 2 domain) with CBL (via phosphorylated C-terminus). Interacts with BCAR1/p130Cas (via SH3 domain). Interacts with MVB12A and ARHGAP17. Interacts with ANLN, CD2 and CBLB. Interacts with PDCD6IP and TSG101. Interacts with RIN3. Interacts directly with RET (inactive) and CBLC; upon RET activation by GDNF suggested to dissociate from RET as CBLC:CD2AP complex. Interacts with CGNL1 and SH3BP1; probably part of a complex at cell junctions. Interacts with CAPZA1. Phosphorylated on tyrosine residues; probably by c-Abl, Fyn and c-Src. In terms of tissue distribution, expressed in podocytes (at protein level).

The protein localises to the cytoplasm. Its subcellular location is the cytoskeleton. The protein resides in the cell projection. It localises to the ruffle. It is found in the cell junction. Its function is as follows. Seems to act as an adapter protein between membrane proteins and the actin cytoskeleton. In collaboration with CBLC, modulates the rate of RET turnover and may act as regulatory checkpoint that limits the potency of GDNF on neuronal survival. Controls CBLC function, converting it from an inhibitor to a promoter of RET degradation. May play a role in receptor clustering and cytoskeletal polarity in the junction between T-cell and antigen-presenting cell. May anchor the podocyte slit diaphragm to the actin cytoskeleton in renal glomerolus. Also required for cytokinesis. Plays a role in epithelial cell junctions formation. In Mus musculus (Mouse), this protein is CD2-associated protein (Cd2ap).